Here is a 308-residue protein sequence, read N- to C-terminus: Urease accessory protein UreD (308 aa).

Belongs to the UreD family. UreD, UreF and UreG form a complex that acts as a GTP-hydrolysis-dependent molecular chaperone, activating the urease apoprotein by helping to assemble the nickel containing metallocenter of UreC. The UreE protein probably delivers the nickel.

The protein resides in the cytoplasm. Required for maturation of urease via the functional incorporation of the urease nickel metallocenter. The polypeptide is Urease accessory protein UreD (Psychromonas ingrahamii (strain DSM 17664 / CCUG 51855 / 37)).